The following is a 245-amino-acid chain: Small ribosomal subunit protein uS3 (245 aa).

The KH type-2 domain maps to 39-108; that stretch reads IRNYIKKNYY…SVFVNVQEVK (70 aa).

Belongs to the universal ribosomal protein uS3 family. In terms of assembly, part of the 30S ribosomal subunit. Forms a tight complex with proteins S10 and S14.

Binds the lower part of the 30S subunit head. Binds mRNA in the 70S ribosome, positioning it for translation. This chain is Small ribosomal subunit protein uS3, found in Dictyoglomus turgidum (strain DSM 6724 / Z-1310).